The primary structure comprises 437 residues: Triacylglycerol lipase (437 aa).

The region spanning 1-100 (MVSYVVALPE…AELANASLLQ (100 aa)) is the PE domain. The segment at 101–206 (SEFASGIGNG…GNSPPPLLNS (106 aa)) is linker. The lipase stretch occupies residues 207-437 (LLGQTVQYTT…QINQQLGIAA (231 aa)). Positions 239–241 (HGG) match the Involved in the stabilization of the negatively charged intermediate by the formation of the oxyanion hole motif. Catalysis depends on residues S309, D383, and H413.

This sequence in the N-terminal section; belongs to the mycobacterial PE family. PGRS subfamily. It in the C-terminal section; belongs to the 'GDXG' lipolytic enzyme family. As to quaternary structure, forms aggregates via its PE domain. Upon export, the PE domain is removed by proteolytic cleavage. Cleavage occurs at the cell surface and is not required for secretion. Cleaved after Gly-149 by the aspartic protease PecA. May also be cleaved before Leu-98 and after Ala-136.

It localises to the cytoplasm. The protein resides in the secreted. Its subcellular location is the cell wall. It is found in the cell surface. It carries out the reaction a triacylglycerol + H2O = a diacylglycerol + a fatty acid + H(+). The catalysed reaction is 1,2,3-tri-(9Z-octadecenoyl)-glycerol + H2O = di-(9Z)-octadecenoylglycerol + (9Z)-octadecenoate + H(+). The enzyme catalyses an acetyl ester + H2O = an aliphatic alcohol + acetate + H(+). It catalyses the reaction a butanoate ester + H2O = an aliphatic alcohol + butanoate + H(+). It carries out the reaction a hexanoate ester + H2O = an aliphatic alcohol + hexanoate + H(+). The catalysed reaction is an octanoate ester + H2O = an aliphatic alcohol + octanoate + H(+). The enzyme catalyses a dodecanoate ester + H2O = an aliphatic alcohol + dodecanoate + H(+). It catalyses the reaction a tetradecanoate ester + H2O = an aliphatic alcohol + tetradecanoate + H(+). It carries out the reaction hexadecanoate ester + H2O = an aliphatic alcohol + hexadecanoate + H(+). The catalysed reaction is octadecanoate ester + H2O = an aliphatic alcohol + octadecanoate + H(+). The enzyme catalyses 1-butyrylglycerol + H2O = butanoate + glycerol + H(+). It catalyses the reaction 1,2,3-tributanoylglycerol + H2O = dibutanoylglycerol + butanoate + H(+). PE domain down-regulates lipase activity. Its activity is regulated as follows. Cleavage by PecA does not affect surface localization and lipase activity. With respect to regulation, inhibited by diethyl-p-nitrophenyl phosphate (E-600) at 0.5 uM, by phenylmethanesulfonyl fluoride at 5 mM and by polyethylene glycol sorbitan monolaurate (Tween 20). Also inhibited by CaCl(2), CoCl(2), MnCl(2), ZnCl(2) and MgCl(2). Inhibited by several hydrazides compounds. Stimulated slightly by SDS at concentrations up to 2 mM, above which the activity is severely inhibited. Its function is as follows. Catalyzes the hydrolysis of both intracellular and extracellular triacylglycerol (TAG). In vitro, can also hydrolyze p-nitrophenyl (pNP) esters with various chain lengths, including pNP-acetate (C2), pNP-butyrate (C4), pNP-caproate (C6), pNP-caprylate (C8), pNP-laurate (C12), pNP-myristate (C14), pNP-palmitate (C16) and pNP-stearate (C18). Also hydrolyzes monobutyrin, tributyrin and trioctanoin. Overexpression results in increase of virulence characterized by reduced survival of infected mouse and increased burden of bacilli in the lungs. Hydrolyzes internal or host-derived TAG depending on its localization. Functionally, hydrolyzes TAG that accumulates within mycobacterial intracytosolic lipid inclusions (ILI). Probably responsible for the utilization of stored long-chain TAG during the dormancy and reactivation stages of the pathogen. In terms of biological role, hydrolyzes host-derived TAG. The sequence is that of Triacylglycerol lipase from Mycobacterium tuberculosis (strain ATCC 25618 / H37Rv).